We begin with the raw amino-acid sequence, 249 residues long: Inner membrane protein pE248R (249 aa).

Gly-2 is lipidated: N-myristoyl glycine; by host. Over 2 to 199 (GGSTSKNSFK…ADAISAVFKN (198 aa)) the chain is Cytoplasmic. The chain crosses the membrane as a helical span at residues 200–220 (IMVAAVVIVVIIVGFIAVFYF). The Extracellular segment spans residues 221–249 (LHSRHRHEEEEEAEPLITSKILKNAAVSQ).

Belongs to the asfivirus E248R family. In terms of assembly, interacts with A151R.

The protein resides in the host membrane. Its subcellular location is the virion membrane. Essential for viral fusion with host endosomal membrane and core release. The protein is Inner membrane protein pE248R of African swine fever virus (isolate Pig/Kenya/KEN-50/1950) (ASFV).